The primary structure comprises 266 residues: Biotin--[acetyl-CoA-carboxylase] ligase (266 aa).

The 189-residue stretch at arginine 14–arginine 202 folds into the BPL/LPL catalytic domain. Biotin is bound by residues serine 38 to threonine 39, glutamine 63, arginine 67, and lysine 138.

It belongs to the biotin--protein ligase family. As to quaternary structure, monomer in solution. Forms dimers under specific crystallization conditions.

The enzyme catalyses biotin + L-lysyl-[protein] + ATP = N(6)-biotinyl-L-lysyl-[protein] + AMP + diphosphate + H(+). It carries out the reaction biotin + ATP + H(+) = biotinyl-5'-AMP + diphosphate. The catalysed reaction is biotinyl-5'-AMP + L-lysyl-[protein] = N(6)-biotinyl-L-lysyl-[protein] + AMP + 2 H(+). Its activity is regulated as follows. Binding of biotin and ATP significantly increases the thermal stability of BirA and leads to the formation of a high affinity holoenzyme complex. Functionally, catalyzes the transfer of biotin onto a conserved lysine residue of the biotin carboxyl carrier protein (BCCP) domain of acetyl-CoA carboxylase and converts it to active holo-BCCP. Forms an acyl-adenylate intermediate. Cannot use GTP or desthiobiotin. This is Biotin--[acetyl-CoA-carboxylase] ligase from Mycobacterium tuberculosis (strain ATCC 25618 / H37Rv).